The chain runs to 245 residues: Phycoerythrobilin:ferredoxin oxidoreductase (245 aa).

It belongs to the HY2 family.

It catalyses the reaction (3Z)-phycoerythrobilin + oxidized 2[4Fe-4S]-[ferredoxin] = 15,16-dihydrobiliverdin + reduced 2[4Fe-4S]-[ferredoxin] + 2 H(+). Catalyzes the two-electron reduction of the C2 and C3(1) diene system of 15,16-dihydrobiliverdin. The sequence is that of Phycoerythrobilin:ferredoxin oxidoreductase (pebB) from Gloeobacter violaceus (strain ATCC 29082 / PCC 7421).